Reading from the N-terminus, the 448-residue chain is Pre-mRNA-splicing factor SAD1 (448 aa).

Met-1 bears the N-acetylmethionine mark. Residues 27–124 (PNYAYLETVV…NSIKFAAYPT (98 aa)) form a UBP-type; degenerate zinc finger. Zn(2+) contacts are provided by Cys-60, Cys-63, His-79, and His-85. In terms of domain architecture, USP spans 150–447 (IGFTNAATYD…ETFIQVWEKQ (298 aa)).

In terms of assembly, component of the 45S U1.U2.U4/U6.U5 penta-snRNP particle, a subcomplex of the spliceosome.

It localises to the nucleus. In terms of biological role, promotes the assembly of newly synthesized U4 snRNA into the U4/U6 snRNP particle. Required for splicing of pre-mRNA. In Saccharomyces cerevisiae (strain ATCC 204508 / S288c) (Baker's yeast), this protein is Pre-mRNA-splicing factor SAD1 (SAD1).